The chain runs to 145 residues: Oleosin L (145 aa).

Ala-2 carries the N-acetylalanine modification. The next 2 membrane-spanning stretches (helical) occupy residues Gly-36–Ala-56 and Leu-59–Ala-79. Positions Pro-58–Pro-69 match the Proline-knot motif. Residues Lys-123 to Glu-132 show a composition bias toward basic and acidic residues. Positions Lys-123–Ser-145 are disordered. Positions Gln-133 to Ser-145 are enriched in polar residues.

This sequence belongs to the oleosin family. As to expression, expressed in seeds (at protein level).

It localises to the lipid droplet. Its subcellular location is the membrane. In terms of biological role, may have a structural role to stabilize the lipid body during desiccation of the seed by preventing coalescence of the oil. Probably interacts with both lipid and phospholipid moieties of lipid bodies. May also provide recognition signals for specific lipase anchorage in lipolysis during seedling growth. This chain is Oleosin L, found in Sesamum indicum (Oriental sesame).